Reading from the N-terminus, the 215-residue chain is Ribose-5-phosphate isomerase A (215 aa).

Residues 26–29 (TGST), 79–82 (DGAD), and 92–95 (KGGG) contribute to the substrate site. Residue E101 is the Proton acceptor of the active site. K119 lines the substrate pocket.

The protein belongs to the ribose 5-phosphate isomerase family. As to quaternary structure, homodimer.

The enzyme catalyses aldehydo-D-ribose 5-phosphate = D-ribulose 5-phosphate. It functions in the pathway carbohydrate degradation; pentose phosphate pathway; D-ribose 5-phosphate from D-ribulose 5-phosphate (non-oxidative stage): step 1/1. In terms of biological role, catalyzes the reversible conversion of ribose-5-phosphate to ribulose 5-phosphate. The protein is Ribose-5-phosphate isomerase A of Stenotrophomonas maltophilia (strain R551-3).